The sequence spans 500 residues: Ephrin type-B receptor 3 (500 aa).

Residues Pro1–Tyr64 enclose the Fibronectin type-III domain. At Pro1 to Leu113 the chain is on the extracellular side. Residues His76–Pro103 are disordered. Basic and acidic residues predominate over residues Lys91–Pro103. Residues Ile114 to Val134 form a helical membrane-spanning segment. The Cytoplasmic portion of the chain corresponds to Cys135–Val500. Tyr168 is subject to Phosphotyrosine; by autocatalysis. The Protein kinase domain maps to Val187–Leu450. ATP contacts are provided by residues Ile193–Val201 and Lys219. The active-site Proton acceptor is Asp312. The 80-residue stretch at Leu421–Val500 folds into the SAM domain. The PDZ-binding motif lies at Ile498–Val500.

Belongs to the protein kinase superfamily. Tyr protein kinase family. Ephrin receptor subfamily. In terms of assembly, heterotetramer upon binding of the ligand. The heterotetramer is composed of an ephrin dimer and a receptor dimer. Oligomerization is probably required to induce biological responses. Post-translationally, phosphorylated. Autophosphorylates upon ligand-binding. Autophosphorylation on Tyr-168 is required for interaction with SH2 domain-containing proteins. In terms of tissue distribution, widely expressed in the developing nervous system.

It localises to the cell membrane. The protein resides in the cell projection. Its subcellular location is the dendrite. It carries out the reaction L-tyrosyl-[protein] + ATP = O-phospho-L-tyrosyl-[protein] + ADP + H(+). Receptor tyrosine kinase which binds promiscuously transmembrane ephrin-B family ligands residing on adjacent cells, leading to contact-dependent bidirectional signaling into neighboring cells. The signaling pathway downstream of the receptor is referred to as forward signaling while the signaling pathway downstream of the ephrin ligand is referred to as reverse signaling. Generally has an overlapping and redundant function with EPHB2. Like EPHB2, functions in axon guidance during development. In addition to its role in axon guidance also plays an important redundant role with other ephrin-B receptors in development and maturation of dendritic spines and the formation of excitatory synapses. May control other aspects of development through regulation of cell migration and positioning. May play a role in early pattern formation within the developing nervous system. The sequence is that of Ephrin type-B receptor 3 (ephb3) from Danio rerio (Zebrafish).